Reading from the N-terminus, the 880-residue chain is Alanine--tRNA ligase (880 aa).

The disordered stretch occupies residues 414 to 443 (TVDESEFESEMEKQRNRARKARSGGDTEGW). Zn(2+) contacts are provided by His566, His570, Cys668, and His672.

Belongs to the class-II aminoacyl-tRNA synthetase family. Zn(2+) serves as cofactor.

The protein localises to the cytoplasm. It catalyses the reaction tRNA(Ala) + L-alanine + ATP = L-alanyl-tRNA(Ala) + AMP + diphosphate. Functionally, catalyzes the attachment of alanine to tRNA(Ala) in a two-step reaction: alanine is first activated by ATP to form Ala-AMP and then transferred to the acceptor end of tRNA(Ala). Also edits incorrectly charged Ser-tRNA(Ala) and Gly-tRNA(Ala) via its editing domain. This Alkaliphilus metalliredigens (strain QYMF) protein is Alanine--tRNA ligase.